The sequence spans 416 residues: UDP-N-acetylmuramoylalanine--D-glutamate ligase (416 aa).

Position 104-110 (104-110) interacts with ATP; sequence GSNGKST.

This sequence belongs to the MurCDEF family.

The protein resides in the cytoplasm. It carries out the reaction UDP-N-acetyl-alpha-D-muramoyl-L-alanine + D-glutamate + ATP = UDP-N-acetyl-alpha-D-muramoyl-L-alanyl-D-glutamate + ADP + phosphate + H(+). Its pathway is cell wall biogenesis; peptidoglycan biosynthesis. Its function is as follows. Cell wall formation. Catalyzes the addition of glutamate to the nucleotide precursor UDP-N-acetylmuramoyl-L-alanine (UMA). This Francisella tularensis subsp. holarctica (strain FTNF002-00 / FTA) protein is UDP-N-acetylmuramoylalanine--D-glutamate ligase.